Consider the following 1149-residue polypeptide: Nitric oxide synthase, inducible (1149 aa).

A disordered region spans residues lysine 22–histidine 83. The DINNN-motif; mediates interaction with SPSB1, SPSB2 and SPSB4 motif lies at aspartate 23–asparagine 27. Polar residues predominate over residues lysine 50–glycine 61. Zn(2+) contacts are provided by cysteine 109 and cysteine 114. Serine 117 serves as a coordination point for (6R)-L-erythro-5,6,7,8-tetrahydrobiopterin. Cysteine 199 lines the heme b pocket. L-arginine is bound by residues glutamine 262, tryptophan 371, tyrosine 372, and glutamate 376. Residues arginine 380, isoleucine 461, tryptophan 462, and phenylalanine 475 each coordinate (6R)-L-erythro-5,6,7,8-tetrahydrobiopterin. Tyrosine 490 provides a ligand contact to heme b. A calmodulin-binding region spans residues phenylalanine 514–serine 534. The 139-residue stretch at alanine 538 to phenylalanine 676 folds into the Flavodoxin-like domain. Threonine 544, glutamate 545, threonine 546, lysine 548, and serine 549 together coordinate FMN. Tyrosine 574 carries the post-translational modification Phosphotyrosine. FMN contacts are provided by serine 590, threonine 591, serine 627, arginine 632, cysteine 634, glutamate 660, and glutamine 664. Residues threonine 729–proline 969 enclose the FAD-binding FR-type domain. NADP(+) is bound at residue arginine 749. FAD contacts are provided by histidine 771, arginine 905, tyrosine 907, serine 908, threonine 923, and alanine 925. Threonine 928 contacts NADP(+). 4 residues coordinate FAD: tyrosine 929, valine 942, cysteine 943, and serine 944. Positions 983, 1016, 1045, 1046, 1052, 1054, 1056, and 1089 each coordinate NADP(+).

The protein belongs to the NOS family. In terms of assembly, homodimer. Interacts with NHERF1. Interacts with GAPDH; induced by oxidatively-modified low-densitity lipoprotein (LDL(ox)). Interacts with S100A8 and S100A9 to form the iNOS-S100A8/9 transnitrosylase complex. Interacts with SPSB1, SPSB2 and SPSB4. Interacts with ELOC and CUL5 in the presence of SPSB1 or SPSB2 or SPSB4. Forms a complex with ASL, ASS1 and HSP90AA1; the complex regulates cell-autonomous L-arginine synthesis and citrulline recycling while channeling extracellular L-arginine to nitric oxide synthesis pathway. The cofactor is heme b. FAD serves as cofactor. It depends on FMN as a cofactor. (6R)-L-erythro-5,6,7,8-tetrahydrobiopterin is required as a cofactor. In terms of processing, polyubiquitinated; mediated by SPSB1, SPSB2 and SPSB4, leading to proteasomal degradation. As to expression, expressed in the lung and colon. Not detected in the heart, aorta, liver, kidney, and spleen.

It is found in the cytoplasm. It localises to the cytosol. The catalysed reaction is 2 L-arginine + 3 NADPH + 4 O2 + H(+) = 2 L-citrulline + 2 nitric oxide + 3 NADP(+) + 4 H2O. Its activity is regulated as follows. Regulated by calcium/calmodulin. Its function is as follows. Produces nitric oxide (NO) which is a messenger molecule with diverse functions throughout the body. In macrophages, NO mediates tumoricidal and bactericidal actions. Also has nitrosylase activity and mediates cysteine S-nitrosylation of cytoplasmic target proteins such PTGS2/COX2. As component of the iNOS-S100A8/9 transnitrosylase complex involved in the selective inflammatory stimulus-dependent S-nitrosylation of GAPDH implicated in regulation of the GAIT complex activity and probably multiple targets including ANXA5, EZR, MSN and VIM. Involved in inflammation, enhances the synthesis of pro-inflammatory mediators such as IL6 and IL8. The sequence is that of Nitric oxide synthase, inducible (NOS2) from Cavia porcellus (Guinea pig).